Here is a 325-residue protein sequence, read N- to C-terminus: Apoptosis-enhancing nuclease (325 aa).

The Nucleolar localization signal motif lies at 27-35; the sequence is RKRHKRRSR. Positions 85 to 105 are disordered; that stretch reads RAGSGSAPCSRRPAPGKASGP. An Exonuclease domain is found at 110–266; that stretch reads CVAIDCEMVG…EDATTAMELY (157 aa). Residues 165 to 188 carry the Nuclear localization signal motif; it reads RQHMRKAVPFQVAQKEILKLLKGK. Positions 281 to 325 are disordered; sequence LWTCPEDREPDSSTDMEQYMEDQYWPDDLAHGSRGGAREAQDRRN. A compositionally biased stretch (basic and acidic residues) spans 308 to 325; sequence DLAHGSRGGAREAQDRRN.

It localises to the nucleus. Its subcellular location is the nucleolus. Exonuclease with activity against single- and double-stranded DNA and RNA. Mediates p53-induced apoptosis. When induced by p53 following DNA damage, digests double-stranded DNA to form single-stranded DNA and amplifies DNA damage signals, leading to enhancement of apoptosis. This chain is Apoptosis-enhancing nuclease (AEN), found in Homo sapiens (Human).